The following is a 62-amino-acid chain: Small EDRK-rich factor 1 (62 aa).

2 stretches are compositionally biased toward basic and acidic residues: residues 1 to 30 (MARGNQREIARQKNMKKTQEISKGKRKEDS) and 50 to 62 (IANEKKSMQTTEK). Residues 1–62 (MARGNQREIA…EKKSMQTTEK (62 aa)) form a disordered region.

This sequence belongs to the SERF family. In terms of assembly, interacts with SNCA; this interaction promotes the aggregation of SNCA. In terms of tissue distribution, expressed in brain (at protein level). Highly expressed in the testis.

The protein resides in the cytoplasm. It localises to the cytosol. Its subcellular location is the nucleus. Positive regulator of amyloid protein aggregation and proteotoxicity. Induces conformational changes in amyloid proteins, such as APP, HTT, and SNCA, driving them into compact formations preceding the formation of aggregates. The chain is Small EDRK-rich factor 1 (Serf1) from Mus musculus (Mouse).